Here is a 445-residue protein sequence, read N- to C-terminus: Phosphoglucosamine mutase (445 aa).

Ser102 serves as the catalytic Phosphoserine intermediate. Ser102, Asp241, Asp243, and Asp245 together coordinate Mg(2+). Ser102 is modified (phosphoserine).

This sequence belongs to the phosphohexose mutase family. Mg(2+) serves as cofactor. Post-translationally, activated by phosphorylation.

It catalyses the reaction alpha-D-glucosamine 1-phosphate = D-glucosamine 6-phosphate. Functionally, catalyzes the conversion of glucosamine-6-phosphate to glucosamine-1-phosphate. This is Phosphoglucosamine mutase from Haemophilus influenzae (strain 86-028NP).